We begin with the raw amino-acid sequence, 527 residues long: Bifunctional purine biosynthesis protein PurH (527 aa).

The 149-residue stretch at Met-1–Thr-149 folds into the MGS-like domain.

This sequence belongs to the PurH family.

It catalyses the reaction (6R)-10-formyltetrahydrofolate + 5-amino-1-(5-phospho-beta-D-ribosyl)imidazole-4-carboxamide = 5-formamido-1-(5-phospho-D-ribosyl)imidazole-4-carboxamide + (6S)-5,6,7,8-tetrahydrofolate. It carries out the reaction IMP + H2O = 5-formamido-1-(5-phospho-D-ribosyl)imidazole-4-carboxamide. Its pathway is purine metabolism; IMP biosynthesis via de novo pathway; 5-formamido-1-(5-phospho-D-ribosyl)imidazole-4-carboxamide from 5-amino-1-(5-phospho-D-ribosyl)imidazole-4-carboxamide (10-formyl THF route): step 1/1. The protein operates within purine metabolism; IMP biosynthesis via de novo pathway; IMP from 5-formamido-1-(5-phospho-D-ribosyl)imidazole-4-carboxamide: step 1/1. In Xanthomonas campestris pv. campestris (strain 8004), this protein is Bifunctional purine biosynthesis protein PurH.